Consider the following 85-residue polypeptide: Toxin BmKaIT1 (85 aa).

A signal peptide spans 1-19 (MNYLVMISFAFLLMTGVES). The region spanning 21 to 83 (RDAYIAQNYN…VPIRVPGKCH (63 aa)) is the LCN-type CS-alpha/beta domain. 4 cysteine pairs are disulfide-bonded: Cys31–Cys82, Cys35–Cys55, Cys41–Cys65, and Cys45–Cys67. Residues 84 to 85 (RR) constitute a propeptide, removed by a carboxypeptidase.

It belongs to the long (4 C-C) scorpion toxin superfamily. Sodium channel inhibitor family. Alpha subfamily. Expressed by the venom gland.

It is found in the secreted. Alpha toxins bind voltage-independently at site-3 of sodium channels (Nav) and inhibit the inactivation of the activated channels, thereby blocking neuronal transmission. Shows a high toxicity toward insects and moderate toxicity against mammals. The polypeptide is Toxin BmKaIT1 (Olivierus martensii (Manchurian scorpion)).